The chain runs to 254 residues: 3-deoxy-manno-octulosonate cytidylyltransferase (254 aa).

The protein belongs to the KdsB family.

The protein resides in the cytoplasm. The catalysed reaction is 3-deoxy-alpha-D-manno-oct-2-ulosonate + CTP = CMP-3-deoxy-beta-D-manno-octulosonate + diphosphate. Its pathway is nucleotide-sugar biosynthesis; CMP-3-deoxy-D-manno-octulosonate biosynthesis; CMP-3-deoxy-D-manno-octulosonate from 3-deoxy-D-manno-octulosonate and CTP: step 1/1. The protein operates within bacterial outer membrane biogenesis; lipopolysaccharide biosynthesis. In terms of biological role, activates KDO (a required 8-carbon sugar) for incorporation into bacterial lipopolysaccharide in Gram-negative bacteria. The polypeptide is 3-deoxy-manno-octulosonate cytidylyltransferase (Chlamydia felis (strain Fe/C-56) (Chlamydophila felis)).